The primary structure comprises 173 residues: Probable F-box protein At1g27490 (173 aa).

Residues 1-46 form the F-box domain; sequence MEWSLPVDLQEEILSRVPAKSLARWKSTPKQWKGPISIEFLHLLRS.

In Arabidopsis thaliana (Mouse-ear cress), this protein is Probable F-box protein At1g27490.